The sequence spans 203 residues: uncharacterized protein (203 aa).

The chain crosses the membrane as a helical span at residues 171–191 (VGYLSIWLKEYWYLVVLFVLI).

Its subcellular location is the membrane. This is an uncharacterized protein from Methanocaldococcus jannaschii (strain ATCC 43067 / DSM 2661 / JAL-1 / JCM 10045 / NBRC 100440) (Methanococcus jannaschii).